Reading from the N-terminus, the 329-residue chain is BTB/POZ domain-containing adapter for CUL3-mediated RhoA degradation protein 1 (329 aa).

The tract at residues 1–31 is disordered; that stretch reads MSAEASGPAPAAAECLESPSPSSVEPGSPSY. The BTB domain maps to 41-109; the sequence is KYVKLNVGGS…LRDGSVPLPE (69 aa).

Belongs to the BACURD family. In terms of assembly, homotetramer; forms a two-fold symmetric tetramer in solution. Interacts with CUL3; interaction is direct and forms a 5:5 heterodecamer. Component of the BCR(KCTD13) E3 ubiquitin ligase complex, at least composed of CUL3, KCTD13/BACURD1 and RBX1. Interacts with RHOA; with a preference for RhoA-GDP. Interacts with POLD2 and PCNA. Interacts with SPRTN.

Its subcellular location is the nucleus. Its pathway is protein modification; protein ubiquitination. Functionally, substrate-specific adapter of a BCR (BTB-CUL3-RBX1) E3 ubiquitin-protein ligase complex required for synaptic transmission. The BCR(KCTD13) E3 ubiquitin ligase complex mediates the ubiquitination of RHOA, leading to its degradation by the proteasome, thereby regulating the actin cytoskeleton and promoting synaptic transmission. This chain is BTB/POZ domain-containing adapter for CUL3-mediated RhoA degradation protein 1 (Kctd13), found in Mus musculus (Mouse).